The chain runs to 233 residues: Ycf53-like protein (233 aa).

It belongs to the ycf53 family.

The polypeptide is Ycf53-like protein (Synechocystis sp. (strain ATCC 27184 / PCC 6803 / Kazusa)).